Consider the following 313-residue polypeptide: Porphobilinogen deaminase (313 aa).

The residue at position 242 (Cys-242) is an S-(dipyrrolylmethanemethyl)cysteine.

This sequence belongs to the HMBS family. Monomer. Dipyrromethane serves as cofactor.

The enzyme catalyses 4 porphobilinogen + H2O = hydroxymethylbilane + 4 NH4(+). The protein operates within porphyrin-containing compound metabolism; protoporphyrin-IX biosynthesis; coproporphyrinogen-III from 5-aminolevulinate: step 2/4. Tetrapolymerization of the monopyrrole PBG into the hydroxymethylbilane pre-uroporphyrinogen in several discrete steps. This chain is Porphobilinogen deaminase, found in Escherichia coli (strain K12 / MC4100 / BW2952).